The sequence spans 66 residues: Venom peptide CtAPI (66 aa).

Cystine bridges form between C7–C44, C16–C40, C20–C33, C24–C64, and C46–C58. One can recognise a TIL domain in the interval 7-64; sequence CEKDEEFVNCAPRCPQNCRNIRSYQPCLVLTPVCAPGCVCRSGKVKNDRGDCVSITDC.

It belongs to the serine protease inhibitor-like (TIL domain-containing) family. In terms of tissue distribution, expressed by the venom gland.

The protein localises to the secreted. Its function is as follows. Serine protease inhibitor. This is Venom peptide CtAPI from Chaerilus tricostatus (Scorpion).